We begin with the raw amino-acid sequence, 913 residues long: Zinc finger protein 112 (913 aa).

In terms of domain architecture, KRAB spans 8–79 (VTFKDVAVVF…ETETPRDGCS (72 aa)). Lys256 is covalently cross-linked (Glycyl lysine isopeptide (Lys-Gly) (interchain with G-Cter in SUMO2)). The C2H2-type 1; degenerate zinc-finger motif lies at 258-280 (YPCTGYRKAFSNDSSSEVHQQFH). The segment at 443–465 (YNSEECGNGFSLASHFQDLQIVH) adopts a C2H2-type 2; degenerate zinc-finger fold. A C2H2-type 3; degenerate zinc finger spans residues 471 to 493 (YKRYVCSNSFSHNLYLQGHPKIH). Residues 497–519 (KPRKEHGNGFNWSSKLKDHQRVH) form a C2H2-type 4; degenerate zinc finger. C2H2-type zinc fingers lie at residues 525-547 (YKCNICGKGFNHRSVLNVHQRVH), 553-575 (YKCEECDKGFSRSSYLQAHQRVH), 581-603 (YKCEECGKGFSRNSYLQGHQRVH), 609-631 (YKCEECGKGFSRSSHLQGHQRVH), 637-659 (FKCEECGKGFSWSFNLQIHQRVH), 665-687 (YKCEECGKGFSKASTLLAHQRVH), 693-715 (YQCDECGKSFSQRSYLQSHQSVH), 721-743 (YICEVCGKGFSQRAYLQGHQRVH), 749-771 (YKCEMCGKGFSQSSRLEAHRRVH), 777-799 (YKCEVCTKGFSESSRLQAHQRVH), 805-827 (YKCEQCGKGFSGYSSLQAHHRVH), 833-855 (YKCEVCGKGFSQRSNLQAHQRVH), and 861-883 (YKCDACGKGFRWSSGLLIHQRVH). Lys890 is covalently cross-linked (Glycyl lysine isopeptide (Lys-Gly) (interchain with G-Cter in SUMO2)).

The protein belongs to the krueppel C2H2-type zinc-finger protein family.

The protein localises to the nucleus. May be involved in transcriptional regulation. This is Zinc finger protein 112 (ZNF112) from Homo sapiens (Human).